Here is a 186-residue protein sequence, read N- to C-terminus: MSDALDEGLVQRIDARGTIEWSETCYRYTGAHRDALSGEGARRFGGRWNPPLLFPAIYLADSAQACMVEVERAAQAASTTAEKMLEAAYRLHTIDVTDLAVLDLTTPQAREAVGLENDDIYGDDWSGCQAVGHAAWFLHMQGVLVPAAGGVGLVVTAYEQRTRPGQLQLRQSVDLTPALYQELRAT.

Belongs to the MbcT/ParT/Res family. In terms of assembly, forms a heterotetramer with cognate antitoxin MbcA.

It carries out the reaction phosphate + NAD(+) = ADP-alpha-D-ribose 1''-phosphate + nicotinamide + H(+). Toxic component of a type II toxin-antitoxin (TA) system. Degrades NAD(+) by phosphorolysis. Neutralized by its cognate antitoxin MbcA. This chain is NAD(+) phosphorylase MbcT (mbcT), found in Mycobacterium bovis (strain ATCC BAA-935 / AF2122/97).